Consider the following 338-residue polypeptide: Fructose-1,6-bisphosphatase 1 (338 aa).

An N-acetylalanine modification is found at alanine 2. Residues 18 to 22 and 28 to 32 each bind AMP; these read VMEQG and TGELT. Residues aspartate 69 and glutamate 98 each contribute to the Mg(2+) site. 113-114 contributes to the AMP binding site; that stretch reads KY. Residues aspartate 119, leucine 121, and aspartate 122 each contribute to the Mg(2+) site. 122–125 is a binding site for substrate; sequence DGSS. Arginine 141 contacts AMP. Lysine 151 carries the N6-succinyllysine modification. Substrate contacts are provided by residues 213 to 216, 244 to 249, tyrosine 265, and 275 to 277; these read NEGY, RYVGSM, and KLR. Tyrosine 216, tyrosine 245, and tyrosine 265 each carry phosphotyrosine. Glutamate 281 contacts Mg(2+).

Belongs to the FBPase class 1 family. As to quaternary structure, homotetramer. It depends on Mg(2+) as a cofactor. Detected in pancreatic beta-cell lines MIN6 and beta-TC and in liver (at protein level). Preferentially expressed in liver, with lower levels detected in pancreatic islets and intestine, and very low levels in blood, muscle, brain and spleen.

The catalysed reaction is beta-D-fructose 1,6-bisphosphate + H2O = beta-D-fructose 6-phosphate + phosphate. It participates in carbohydrate biosynthesis; gluconeogenesis. Its activity is regulated as follows. Subject to complex allosteric regulation. The enzyme can assume an active R-state, or an inactive T-state. Intermediate conformations may exist. AMP acts as an allosteric inhibitor. AMP binding affects the turnover of bound substrate and not the affinity for substrate. Fructose 2,6-bisphosphate acts as a competitive inhibitor. Fructose 2,6-bisphosphate and AMP have synergistic effects. Its function is as follows. Catalyzes the hydrolysis of fructose 1,6-bisphosphate to fructose 6-phosphate in the presence of divalent cations, acting as a rate-limiting enzyme in gluconeogenesis. Plays a role in regulating glucose sensing and insulin secretion of pancreatic beta-cells. Appears to modulate glycerol gluconeogenesis in liver. Important regulator of appetite and adiposity; increased expression of the protein in liver after nutrient excess increases circulating satiety hormones and reduces appetite-stimulating neuropeptides and thus seems to provide a feedback mechanism to limit weight gain. The sequence is that of Fructose-1,6-bisphosphatase 1 (Fbp1) from Mus musculus (Mouse).